A 313-amino-acid chain; its full sequence is BTB/POZ domain-containing adapter for CUL3-mediated RhoA degradation protein 3 (313 aa).

M1 carries the post-translational modification N-acetylmethionine. S23 carries the post-translational modification Phosphoserine. The BTB domain occupies 32–100 (KYVKLNVGGA…LRDGAVPLPE (69 aa)). Positions 239–245 (QTKVEFP) match the PCNA-binding motif.

The protein belongs to the BACURD family. As to quaternary structure, homotetramer; forms a two-fold symmetric tetramer in solution. Interacts with CUL3; interaction is direct and forms a 5:5 heterodecamer. Component of the BCR(BACURD3) E3 ubiquitin ligase complex, at least composed of CUL3, KCTD10/BACURD3 and RBX1. Interacts with DNA polymerase delta subunit 2/POLD2. Interacts with PCNA.

The protein resides in the nucleus. Its pathway is protein modification; protein ubiquitination. Substrate-specific adapter of a BCR (BTB-CUL3-RBX1) E3 ubiquitin-protein ligase complex. The BCR(BACURD3) E3 ubiquitin ligase complex mediates the ubiquitination of target proteins, leading to their degradation by the proteasome. The sequence is that of BTB/POZ domain-containing adapter for CUL3-mediated RhoA degradation protein 3 (KCTD10) from Homo sapiens (Human).